The sequence spans 403 residues: Tyrosine--tRNA ligase (403 aa).

A 'HIGH' region motif is present at residues 43–52 (PTAPDLHLGH). The 'KMSKS' region signature appears at 227–231 (KMSKS). Lys-230 serves as a coordination point for ATP. The region spanning 338-399 (LPIAQLLKQT…GKRKFARVTI (62 aa)) is the S4 RNA-binding domain.

It belongs to the class-I aminoacyl-tRNA synthetase family. TyrS type 2 subfamily. As to quaternary structure, homodimer.

The protein localises to the cytoplasm. The catalysed reaction is tRNA(Tyr) + L-tyrosine + ATP = L-tyrosyl-tRNA(Tyr) + AMP + diphosphate + H(+). Its function is as follows. Catalyzes the attachment of tyrosine to tRNA(Tyr) in a two-step reaction: tyrosine is first activated by ATP to form Tyr-AMP and then transferred to the acceptor end of tRNA(Tyr). In Nitrosospira multiformis (strain ATCC 25196 / NCIMB 11849 / C 71), this protein is Tyrosine--tRNA ligase.